A 398-amino-acid polypeptide reads, in one-letter code: MNYNKKSIEDIDVKGKKVLVRCDFNVPLNEGKITDENRLVGALPTIKYLMEKGAKIILCSHMGKPKGEPKKELSLLPVAKRLSEMLNKEVIFADDDNVVGENAKKAVEDMKDGDVVLLQNTRYRKEETKNEEVFSKELASLADVFVNDAFGTAHRAHCSTVGVTNYLKEAACGYLIQKELKFLGNAVEKPERPFVAILGGAKVSDKINVINNLLDKVDTLIIGGGMGYTFLKAQGYTIGNSLVEEDKVEYSKEMIDKAKEKGVNLLLPIDNVVADKFDKDASPVITEDQNIGEGYMGLDIGPKTAKIYSDAIKSAKTVVWNGPMGVFEFKSFANGTIEVAKAMADSDAVTIIGGGDSAAAVNILGFGDKMTHISTGGGASLEFLEGKELPGIAALNDK.

Residues 23-25, Arg38, 61-64, Arg122, and Arg155 contribute to the substrate site; these read DFN and HMGK. Residues Lys206, Gly297, Glu328, and 354-357 each bind ATP; that span reads GGDS.

This sequence belongs to the phosphoglycerate kinase family. In terms of assembly, monomer.

It localises to the cytoplasm. It carries out the reaction (2R)-3-phosphoglycerate + ATP = (2R)-3-phospho-glyceroyl phosphate + ADP. Its pathway is carbohydrate degradation; glycolysis; pyruvate from D-glyceraldehyde 3-phosphate: step 2/5. This is Phosphoglycerate kinase from Clostridium botulinum (strain Hall / ATCC 3502 / NCTC 13319 / Type A).